Here is a 323-residue protein sequence, read N- to C-terminus: tRNA-dihydrouridine(16) synthase (323 aa).

FMN contacts are provided by residues Pro-7–Glu-9 and Gln-68. Catalysis depends on Cys-98, which acts as the Proton donor. FMN-binding positions include Lys-139, Asn-200–Glu-202, and Cys-224–Arg-225.

Belongs to the Dus family. DusC subfamily. Requires FMN as cofactor.

The catalysed reaction is 5,6-dihydrouridine(16) in tRNA + NADP(+) = uridine(16) in tRNA + NADPH + H(+). The enzyme catalyses 5,6-dihydrouridine(16) in tRNA + NAD(+) = uridine(16) in tRNA + NADH + H(+). Functionally, catalyzes the synthesis of 5,6-dihydrouridine (D), a modified base found in the D-loop of most tRNAs, via the reduction of the C5-C6 double bond in target uridines. Specifically modifies U16 in tRNAs. The polypeptide is tRNA-dihydrouridine(16) synthase (Vibrio cholerae serotype O1 (strain ATCC 39315 / El Tor Inaba N16961)).